We begin with the raw amino-acid sequence, 337 residues long: Heat-inducible transcription repressor HrcA (337 aa).

The protein belongs to the HrcA family.

Functionally, negative regulator of class I heat shock genes (grpE-dnaK-dnaJ and groELS operons). Prevents heat-shock induction of these operons. The protein is Heat-inducible transcription repressor HrcA of Polaromonas naphthalenivorans (strain CJ2).